The primary structure comprises 219 residues: Mitochondrial fission factor homolog A (219 aa).

The Cytoplasmic portion of the chain corresponds to 1-199 (MAEINRMQYE…ENKERVKHEM (199 aa)). Positions 164-194 (DLALADAASLRRQIIKLNRRLLLLEEENKER) form a coiled coil. Residues 200–217 (TMYSIIIIFGLLNSWLWL) traverse the membrane as a helical; Anchor for type IV membrane protein segment. Residues 218–219 (RR) lie on the Extracellular side of the membrane.

The protein belongs to the Tango11 family.

It is found in the mitochondrion outer membrane. Its subcellular location is the peroxisome. The protein localises to the cytoplasmic vesicle. It localises to the secretory vesicle. The protein resides in the synaptic vesicle. In terms of biological role, plays a role in mitochondrial and peroxisomal fission. Promotes the recruitment and association of the fission mediator dynamin-related protein 1 (DNM1L) to the mitochondrial surface. The chain is Mitochondrial fission factor homolog A (mff-a) from Xenopus laevis (African clawed frog).